The chain runs to 96 residues: Mitochondrial import inner membrane translocase subunit Tim13-B (96 aa).

The Twin CX3C motif motif lies at 47 to 70; sequence CFRKCIGKPGGSLDNSEQKCVAMC. Cystine bridges form between cysteine 47–cysteine 70 and cysteine 51–cysteine 66.

Belongs to the small Tim family. As to quaternary structure, heterohexamer; composed of 3 copies of TIMM8 (TIMM8A or TIMM8B) and 3 copies of TIMM13, named soluble 70 kDa complex. Associates with the TIM22 complex, whose core is composed of TIMM22.

Its subcellular location is the mitochondrion inner membrane. Mitochondrial intermembrane chaperone that participates in the import and insertion of some multi-pass transmembrane proteins into the mitochondrial inner membrane. Also required for the transfer of beta-barrel precursors from the TOM complex to the sorting and assembly machinery (SAM complex) of the outer membrane. Acts as a chaperone-like protein that protects the hydrophobic precursors from aggregation and guide them through the mitochondrial intermembrane space. The TIMM8-TIMM13 complex mediates the import of some proteins while the predominant TIMM9-TIMM10 70 kDa complex mediates the import of much more proteins. The polypeptide is Mitochondrial import inner membrane translocase subunit Tim13-B (timm13-b) (Xenopus laevis (African clawed frog)).